The following is a 218-amino-acid chain: Cell division protein SepF (218 aa).

The tract at residues Asp20 to Pro81 is disordered. The span at Pro36–Pro65 shows a compositional bias: basic and acidic residues.

Belongs to the SepF family. As to quaternary structure, homodimer. Interacts with FtsZ.

The protein localises to the cytoplasm. Cell division protein that is part of the divisome complex and is recruited early to the Z-ring. Probably stimulates Z-ring formation, perhaps through the cross-linking of FtsZ protofilaments. Its function overlaps with FtsA. The chain is Cell division protein SepF from Mycobacterium bovis (strain ATCC BAA-935 / AF2122/97).